A 343-amino-acid polypeptide reads, in one-letter code: Anthranilate phosphoribosyltransferase (343 aa).

Residues Gly86, 89-90 (GD), Thr94, 96-99 (NIST), 114-122 (KHGNKSASG), and Ser126 contribute to the 5-phospho-alpha-D-ribose 1-diphosphate site. Gly86 is a binding site for anthranilate. Residue Ser98 coordinates Mg(2+). Asn117 contacts anthranilate. Arg172 serves as a coordination point for anthranilate. Mg(2+) is bound by residues Asp231 and Glu232.

It belongs to the anthranilate phosphoribosyltransferase family. As to quaternary structure, homodimer. Mg(2+) serves as cofactor.

It carries out the reaction N-(5-phospho-beta-D-ribosyl)anthranilate + diphosphate = 5-phospho-alpha-D-ribose 1-diphosphate + anthranilate. It participates in amino-acid biosynthesis; L-tryptophan biosynthesis; L-tryptophan from chorismate: step 2/5. In terms of biological role, catalyzes the transfer of the phosphoribosyl group of 5-phosphorylribose-1-pyrophosphate (PRPP) to anthranilate to yield N-(5'-phosphoribosyl)-anthranilate (PRA). This Prochlorococcus marinus subsp. pastoris (strain CCMP1986 / NIES-2087 / MED4) protein is Anthranilate phosphoribosyltransferase.